Here is a 487-residue protein sequence, read N- to C-terminus: Cytochrome P450 2C21 (487 aa).

Residue cysteine 432 coordinates heme.

This sequence belongs to the cytochrome P450 family. Requires heme as cofactor. In terms of tissue distribution, liver.

The protein localises to the endoplasmic reticulum membrane. It is found in the microsome membrane. The enzyme catalyses an organic molecule + reduced [NADPH--hemoprotein reductase] + O2 = an alcohol + oxidized [NADPH--hemoprotein reductase] + H2O + H(+). In terms of biological role, cytochromes P450 are a group of heme-thiolate monooxygenases. In liver microsomes, this enzyme is involved in an NADPH-dependent electron transport pathway. It oxidizes a variety of structurally unrelated compounds, including steroids, fatty acids, and xenobiotics. Showed testosterone hydrolase activity. The chain is Cytochrome P450 2C21 (CYP2C21) from Canis lupus familiaris (Dog).